Reading from the N-terminus, the 521-residue chain is uncharacterized protein (521 aa).

Positions 1-25 (MLQRSLGVNGRKLAMSARSAKRERK) are disordered. 6 helical membrane passes run 68 to 88 (GAVWVLPTFGVAIGLGSGAVL), 114 to 134 (VLIVVSATMITTIGIVFSLTV), 160 to 180 (VVLAIFACTFAYSTGGLHTVG), 192 to 212 (VAVTGSLALAFVSIAALIYFL), 290 to 310 (ALLVTFVGDYVTAGGLLGWCW), and 399 to 419 (LLFWLPYPSFATYLHVGCAQI).

It is found in the cell membrane. This is an uncharacterized protein from Mycobacterium bovis (strain ATCC BAA-935 / AF2122/97).